A 367-amino-acid chain; its full sequence is 15-cis-zeta-carotene isomerase, chloroplastic (367 aa).

The N-terminal 58 residues, 1 to 58 (MAVYHLLLSSPPSLLLLPPSPRRPNLTLIRRIPAHPRLGNSTSLLSSSSPVIRKILVR), are a transit peptide targeting the chloroplast. 6 helical membrane passes run 95-115 (SWVY…VVWI), 137-157 (EVAM…LASL), 172-192 (VLFA…FINH), 211-231 (AIWV…FNLL), 269-289 (LWIG…HHLF), and 339-359 (LPYL…PLMQ).

In terms of tissue distribution, expressed in leaves and at lower levels in roots.

The protein localises to the plastid. It is found in the chloroplast membrane. It carries out the reaction 9,9',15-tri-cis-zeta-carotene = 9,9'-di-cis-zeta-carotene. Isomerase involved in the biosynthesis of carotenoids. Catalyzes the cis- to trans-conversion of the 15-cis-bond in 9,15,9'-tri-cis-zeta-carotene. This chain is 15-cis-zeta-carotene isomerase, chloroplastic (Z-ISO), found in Arabidopsis thaliana (Mouse-ear cress).